Here is a 99-residue protein sequence, read N- to C-terminus: Small ribosomal subunit protein bS20 (99 aa).

Belongs to the bacterial ribosomal protein bS20 family.

Binds directly to 16S ribosomal RNA. This chain is Small ribosomal subunit protein bS20, found in Picosynechococcus sp. (strain ATCC 27264 / PCC 7002 / PR-6) (Agmenellum quadruplicatum).